The following is a 123-amino-acid chain: S-adenosylmethionine decarboxylase proenzyme 2 (123 aa).

S65 serves as the catalytic Schiff-base intermediate with substrate; via pyruvic acid. Residue S65 is modified to Pyruvic acid (Ser); by autocatalysis. H70 serves as the catalytic Proton acceptor; for processing activity. C85 serves as the catalytic Proton donor; for catalytic activity.

It belongs to the prokaryotic AdoMetDC family. Type 1 subfamily. In terms of assembly, heterotetramer of two alpha and two beta chains arranged as a dimer of alpha/beta heterodimers. It depends on pyruvate as a cofactor. Is synthesized initially as an inactive proenzyme. Formation of the active enzyme involves a self-maturation process in which the active site pyruvoyl group is generated from an internal serine residue via an autocatalytic post-translational modification. Two non-identical subunits are generated from the proenzyme in this reaction, and the pyruvate is formed at the N-terminus of the alpha chain, which is derived from the carboxyl end of the proenzyme. The post-translation cleavage follows an unusual pathway, termed non-hydrolytic serinolysis, in which the side chain hydroxyl group of the serine supplies its oxygen atom to form the C-terminus of the beta chain, while the remainder of the serine residue undergoes an oxidative deamination to produce ammonia and the pyruvoyl group blocking the N-terminus of the alpha chain.

It catalyses the reaction S-adenosyl-L-methionine + H(+) = S-adenosyl 3-(methylsulfanyl)propylamine + CO2. It participates in amine and polyamine biosynthesis; S-adenosylmethioninamine biosynthesis; S-adenosylmethioninamine from S-adenosyl-L-methionine: step 1/1. Catalyzes the decarboxylation of S-adenosylmethionine to S-adenosylmethioninamine (dcAdoMet), the propylamine donor required for the synthesis of the polyamines spermine and spermidine from the diamine putrescine. In Bacillus cereus (strain ATCC 14579 / DSM 31 / CCUG 7414 / JCM 2152 / NBRC 15305 / NCIMB 9373 / NCTC 2599 / NRRL B-3711), this protein is S-adenosylmethionine decarboxylase proenzyme 2.